Reading from the N-terminus, the 494-residue chain is UDP-N-acetylmuramate--L-alanine ligase (494 aa).

Residue 140–146 (GTHGKTT) participates in ATP binding.

Belongs to the MurCDEF family.

It localises to the cytoplasm. It catalyses the reaction UDP-N-acetyl-alpha-D-muramate + L-alanine + ATP = UDP-N-acetyl-alpha-D-muramoyl-L-alanine + ADP + phosphate + H(+). Its pathway is cell wall biogenesis; peptidoglycan biosynthesis. Its function is as follows. Cell wall formation. The protein is UDP-N-acetylmuramate--L-alanine ligase of Trichormus variabilis (strain ATCC 29413 / PCC 7937) (Anabaena variabilis).